Here is a 3011-residue protein sequence, read N- to C-terminus: Genome polyprotein (3011 aa).

Ser2 carries the post-translational modification N-acetylserine; by host. An interaction with STAT1 region spans residues 2–23; it reads STIPKPQRKTKRNTNRRPQDVK. The interaction with EIF2AK2/PKR stretch occupies residues 2 to 58; sequence STIPKPQRKTKRNTNRRPQDVKFPGGGQIVGGVYLLPRRGPRLGVRATRKTSERSQP. The interaction with DDX3X stretch occupies residues 2–59; sequence STIPKPQRKTKRNTNRRPQDVKFPGGGQIVGGVYLLPRRGPRLGVRATRKTSERSQPR. Positions 2-75 are disordered; sequence STIPKPQRKT…PKVRRPEGRT (74 aa). Residues 2–168 lie on the Cytoplasmic side of the membrane; that stretch reads STIPKPQRKT…EDGVNYATGN (167 aa). Short sequence motifs (nuclear localization signal) lie at residues 5–13 and 38–43; these read PKPQRKTKR and PRRGPR. Basic residues predominate over residues 7–16; it reads PQRKTKRNTN. The span at 32 to 47 shows a compositional bias: low complexity; that stretch reads GGVYLLPRRGPRLGVR. Residue Ser53 is modified to Phosphoserine; by host. 2 consecutive short sequence motifs (nuclear localization signal) follow at residues 58 to 64 and 66 to 71; these read PRGRRQP and PKVRRP. Basic residues predominate over residues 58–68; it reads PRGRRQPIPKV. The residue at position 99 (Ser99) is a Phosphoserine; by host. Residues 112–152 are important for endoplasmic reticulum and mitochondrial localization; it reads PRRRSRNLGKVIDTLTCGFADLMGYIPLVGAPLGGAARALA. Phosphoserine; by host PKA is present on Ser116. An interaction with APOA2 region spans residues 122–173; sequence VIDTLTCGFADLMGYIPLVGAPLGGAARALAHGVRVLEDGVNYATGNLPGCS. The tract at residues 164–167 is important for lipid droplets localization; that stretch reads YATG. A helical membrane pass occupies residues 169 to 189; the sequence is LPGCSFSIFLLALLSCLTVPA. Residues 178 to 191 constitute a propeptide, ER anchor for the core protein, removed in mature form by host signal peptidase; that stretch reads LLALLSCLTVPASA. Topologically, residues 190–358 are lumenal; that stretch reads SAYQVRNSTG…AGAHWGVLAG (169 aa). N-linked (GlcNAc...) asparagine; by host glycosylation is found at Asn196, Asn209, and Asn234. Residues 265–296 form an important for fusion region; that stretch reads LVGSATLCSALYVGDLCGSVFLIGQLFTFSPR. N-linked (GlcNAc...) asparagine; by host glycosylation occurs at Asn305. A helical transmembrane segment spans residues 359-379; sequence IAYFSMVGNWAKVLVVLLLFA. Topologically, residues 380-725 are lumenal; the sequence is GVDAETIVSG…WEYVVLLFLL (346 aa). An HVR1 region spans residues 385 to 411; the sequence is TIVSGGQAARAMSGLVSLFTPGAKQNI. N-linked (GlcNAc...) (high mannose) asparagine; by host glycans are attached at residues Asn417, Asn423, Asn430, and Asn448. Cystine bridges form between Cys429-Cys552, Cys452-Cys459, Cys486-Cys494, and Cys503-Cys508. The interval 474–479 is HVR2; sequence HANGSG. The tract at residues 480–493 is CD81-binding 1; sequence PDQRPYCWHYPPKP. The N-linked (GlcNAc...) (high mannose) asparagine; by host glycan is linked to Asn532. N-linked (GlcNAc...) asparagine; by host glycosylation occurs at Asn540. The segment at 544-551 is CD81-binding 2; the sequence is PPLGNWFG. Asn556 carries an N-linked (GlcNAc...) (high mannose) asparagine; by host glycan. A disulfide bridge links Cys564 with Cys569. A glycan (N-linked (GlcNAc...) (high mannose) asparagine; by host) is linked at Asn576. Intrachain disulfides connect Cys581–Cys585, Cys597–Cys620, and Cys607–Cys644. N-linked (GlcNAc...) (high mannose) asparagine; by host glycosylation is found at Asn623 and Asn645. The cysteines at positions 652 and 677 are disulfide-linked. The PKR/eIF2-alpha phosphorylation homology domain (PePHD) stretch occupies residues 660–671; sequence SELSPLLLSTTQ. Residues 726 to 746 traverse the membrane as a helical segment; that stretch reads LADARVCSCLWMMLLISQAEA. At 747–757 the chain is on the lumenal side; sequence ALENLVILNAA. Residues 758-778 traverse the membrane as a helical segment; the sequence is SLAGTRGLVSFLVFFCFAWYL. At 779 to 781 the chain is on the cytoplasmic side; it reads KGR. Residues 782 to 803 form a helical membrane-spanning segment; that stretch reads WVPGAAYALYGMWPLLLLLLAL. At 804 to 813 the chain is on the lumenal side; that stretch reads PQRAYALDTE. The helical transmembrane segment at 814–834 threads the bilayer; it reads VAASCGGVVLVGLMALTLSPY. Topologically, residues 835-838 are cytoplasmic; it reads YKRC. Residues 839–859 traverse the membrane as a helical segment; the sequence is ISWCLWWLQYFLTRVEAQLHV. Residues 860–881 are Lumenal-facing; it reads WVPPLNVRGGRDAVILLMCVVH. Residues 882 to 902 form a helical membrane-spanning segment; the sequence is PTLVFDITKLLLAVLGPLWIL. One can recognise a Peptidase C18 domain in the interval 903-1026; that stretch reads QASLLKVPYF…GMVSKGWRLL (124 aa). Topologically, residues 903 to 1657 are cytoplasmic; it reads QASLLKVPYF…CMSADLEVVT (755 aa). A protease NS2-3 region spans residues 904 to 1206; that stretch reads ASLLKVPYFV…PVESLETTMR (303 aa). Residue Cys922 is the site of S-palmitoyl cysteine; by host attachment. The segment at 929-949 is interaction with host SCPS1; sequence VGGHYVQMAIIKLGALTGTYV. Active-site for protease NS2 activity; shared with dimeric partner residues include His952, Glu972, and Cys993. The 182-residue stretch at 1027–1208 folds into the Peptidase S29 domain; sequence APITAYAQQT…ESLETTMRSP (182 aa). Catalysis depends on charge relay system; for serine protease NS3 activity residues His1083 and Asp1107. Residues Cys1123 and Cys1125 each coordinate Zn(2+). The active-site Charge relay system; for serine protease NS3 activity is the Ser1165. Positions 1171 and 1175 each coordinate Zn(2+). One can recognise a Helicase ATP-binding domain in the interval 1217 to 1369; sequence PAVPQSFQVA…ANIEEVALST (153 aa). 1230–1237 provides a ligand contact to ATP; that stretch reads APTGSGKS. 2 residues coordinate Mg(2+): Ser1237 and Glu1317. The DECH box motif lies at 1316–1319; the sequence is DECH. Residues 1486–1497 are RNA-binding; sequence QRRGRTGRGKPG. Residues 1658–1678 traverse the membrane as a helical segment; sequence STWVLVGGVLAALAAYCLSTG. An NS3-binding region spans residues 1679–1690; the sequence is CVVIVGRIVLSG. At 1679 to 1805 the chain is on the cytoplasmic side; the sequence is CVVIVGRIVL…AVTSPLTTSQ (127 aa). Residues 1806-1824 form a helical membrane-spanning segment; the sequence is TLLFNILGGWVAAQLAAPG. Over 1825–1828 the chain is Lumenal; sequence AATA. Residues 1829–1849 form a helical membrane-spanning segment; sequence FVGSGLAGAAVGSVGLGRVLV. Position 1850 (Asp1850) is a topological domain, cytoplasmic. The chain crosses the membrane as a helical span at residues 1851–1871; that stretch reads ILAGYGAGVAGALVAFKIMSG. At 1872–1881 the chain is on the lumenal side; the sequence is ELPSTEDLVN. A helical membrane pass occupies residues 1882-1902; sequence LLPAILSPGALVVGVVCAAIL. The Cytoplasmic segment spans residues 1903-1972; sequence RRHVGPGEGA…WLSSESTTPC (70 aa). The S-palmitoyl cysteine; by host moiety is linked to residue Cys1972. Residues 1973 to 2002 lie within the membrane without spanning it; sequence SGSWLRDIWDWICEVLSDFKTWLKTKLMPH. Over 2003 to 2990 the chain is Cytoplasmic; it reads LPGIPFVSCQ…YHSVSHARPR (988 aa). The Zn(2+) site is built by Cys2011, Cys2029, Cys2031, and Cys2052. An FKBP8-binding region spans residues 2120-2208; that stretch reads EFFTELDGVR…ASSSASQLSA (89 aa). Residues 2120-2332 are transcriptional activation; the sequence is EFFTELDGVR…PVPPPRKKRT (213 aa). The segment at 2135–2139 is interaction with non-structural protein 4A; that stretch reads PPCKP. The segment at 2187-2207 is disordered; that stretch reads GRRLARGSPPSEASSSASQLS. The tract at residues 2189–2441 is interaction with host SKP2; it reads RLARGSPPSE…TPCAAEEQKL (253 aa). Ser2194 carries the phosphoserine; by host; in p56 modification. Residues Ser2197, Ser2201, Ser2204, Ser2207, and Ser2210 each carry the phosphoserine; by host; in p58 modification. The segment at 2210–2249 is ISDR; it reads SLKATCTINHDSPDAELIEANLLWRQEMGGNITRVESENK. The interval 2210–2275 is interaction with EIF2AK2/PKR; sequence SLKATCTINH…REISVPAEIL (66 aa). Residues 2249 to 2306 are NS4B-binding; it reads KVVILDSFDPLVAEEDEREISVPAEILRKSRRFTQALPIWARPDYNPPLIETWKKPNY. A disordered region spans residues 2312–2334; sequence HGCPLPPPQSPPVPPPRKKRTVV. Residues 2315–2326 show a composition bias toward pro residues; the sequence is PLPPPQSPPVPP. The SH3-binding motif lies at 2322–2325; it reads PPVP. The short motif at 2326-2334 is the Nuclear localization signal element; that stretch reads PPRKKRTVV. Lys2350 participates in a covalent cross-link: Glycyl lysine isopeptide (Lys-Gly) (interchain with G-Cter in ubiquitin). Positions 2351-2369 are enriched in low complexity; sequence SFGSSSTSGITGDNTTTSS. The segment at 2351-2408 is disordered; it reads SFGSSSTSGITGDNTTTSSEPAPSGCSPDSDAESYSSMPPLEGEPGDPDLSDGSWSTV. Residues 2354-2377 form a V3 region; that stretch reads SSSTSGITGDNTTTSSEPAPSGCS. A phosphoserine; by host mark is found at Ser2449 and Ser2462. A RdRp catalytic domain is found at 2634–2752; it reads PMGFSYDTRC…ICESAGVQED (119 aa). Mg(2+)-binding residues include Asp2640, Asp2738, and Asp2739. Residues 2991–3011 form a helical membrane-spanning segment; that stretch reads WFWFCLLLLAAGVGIYLLPNR.

The protein belongs to the hepacivirus polyprotein family. As to quaternary structure, homooligomer. Interacts with E1 (via C-terminus). Interacts with the non-structural protein 5A. Interacts (via N-terminus) with host STAT1 (via SH2 domain); this interaction results in decreased STAT1 phosphorylation and ubiquitin-mediated proteasome-dependent STAT1 degradation, leading to decreased IFN-stimulated gene transcription. Interacts with host STAT3; this interaction constitutively activates STAT3. Interacts with host LTBR receptor. Interacts with host TNFRSF1A receptor and possibly induces apoptosis. Interacts with host HNRPK. Interacts with host YWHAE. Interacts with host UBE3A/E6AP. Interacts with host DDX3X. Interacts with host APOA2. Interacts with host RXRA protein. Interacts with host SP110 isoform 3/Sp110b; this interaction sequesters the transcriptional corepressor SP110 away from the nucleus. Interacts with host CREB3 nuclear transcription protein; this interaction triggers cell transformation. Interacts with host ACY3. Interacts with host C1QR1. Interacts with host RBM24; this interaction, which enhances the interaction of the mature core protein with 5'-UTR, may inhibit viral translation and favor replication. Interacts with host EIF2AK2/PKR; this interaction induces the autophosphorylation of EIF2AK2. Part of the viral assembly initiation complex composed of NS2, E1, E2, NS3, NS4A, NS5A and the mature core protein. Forms a heterodimer with envelope glycoprotein E2. Interacts with mature core protein. Interacts with protease NS2. The heterodimer E1/E2 interacts with host CLDN1; this interaction plays a role in viral entry into host cell. Interacts with host SPSB2 (via C-terminus). Part of the viral assembly initiation complex composed of NS2, E1, E2, NS3, NS4A, NS5A and the mature core protein. Interacts with host NEURL3; this interaction prevents E1 binding to glycoprotein E2. In terms of assembly, forms a heterodimer with envelope glycoprotein E1. Interacts with host CD81 and SCARB1 receptors; these interactions play a role in viral entry into host cell. Interacts with host EIF2AK2/PKR; this interaction inhibits EIF2AK2 and probably allows the virus to evade the innate immune response. Interacts with host CD209/DC-SIGN and CLEC4M/DC-SIGNR. Interact with host SPCS1; this interaction is essential for viral particle assembly. Interacts with protease NS2. The heterodimer E1/E2 interacts with host CLDN1; this interaction plays a role in viral entry into host cell. Part of the viral assembly initiation complex composed of NS2, E1, E2, NS3, NS4A, NS5A and the mature core protein. Interacts with host SLC3A2/4F2hc; the interaction may facilitate viral entry into host cell. Interacts with human PLSCR1. As to quaternary structure, homohexamer. Homoheptamer. Interacts with protease NS2. Homodimer. Interacts with host SPCS1; this interaction is essential for viral particle assembly. Interacts with envelope glycoprotein E1. Interacts with envelope glycoprotein E2. Interacts with viroporin p7. Interacts with serine protease/helicase NS3. Part of the replication complex composed of NS2, NS3, NS4A, NS4B, NS5A and the RNA-directed RNA polymerase embedded in an ER-derived membranous web. Part of the viral assembly initiation complex composed of NS2, E1, E2, NS3, NS4A, NS5A and the mature core protein. In terms of assembly, interacts with protease NS2. Interacts with non-structural protein 4A; this interaction stabilizes the folding of NS3 serine protease. NS3-NS4A interaction is essential for NS3 activation and allows membrane anchorage of the latter. NS3/NS4A complex also prevents phosphorylation of host IRF3, thus preventing the establishment of dsRNA induced antiviral state. Interacts with host MAVS; this interaction leads to the cleavage and inhibition of host MAVS. Interacts with host TICAM1; this interaction leads to the cleavage and inhibition of host TICAM1. Interacts with host TANK-binding kinase/TBK1; this interaction results in the inhibition of the association between TBK1 and IRF3, which leads to the inhibition of IRF3 activation. Interacts with host RBM24. Part of the replication complex composed of NS2, NS3, NS4A, NS4B, NS5A and the RNA-directed RNA polymerase embedded in an ER-derived membranous web. Part of the viral assembly initiation complex composed of NS2, E1, E2, NS3, NS4A, NS5A and the mature core protein. As to quaternary structure, interacts with NS3 serine protease; this interaction stabilizes the folding of NS3 serine protease. NS3-NS4A interaction is essential for NS3 activation and allows membrane anchorage of the latter. Interacts with non-structural protein 5A (via N-terminus). Part of the replication complex composed of NS2, NS3, NS4A, NS4B, NS5A and the RNA-directed RNA polymerase embedded in an ER-derived membranous web. Part of the viral assembly initiation complex composed of NS2, E1, E2, NS3, NS4A, NS5A and the mature core protein. Homomultimer. Interacts with non-structural protein NS5A. Interacts with host PLA2G4C; this interaction likely initiates the recruitment of replication complexes to lipid droplets. Interacts with host STING; this interaction disrupts the interaction between STING and TBK1 thereby suppressing the interferon signaling. Part of the replication complex composed of NS2, NS3, NS4A, NS4B, NS5A and the RNA-directed RNA polymerase embedded in an ER-derived membranous web. In terms of assembly, monomer. Homodimer; dimerization is required for RNA-binding. Interacts with the mature core protein. Interacts (via N-terminus) with non-structural protein 4A. Interacts with non-structural protein 4B. Interacts (via region D2) with RNA-directed RNA polymerase. Part of the viral assembly initiation complex composed of NS2, E1, E2, NS3, NS4A, NS5A and the mature core protein. Part of the replication complex composed of NS2, NS3, NS4A, NS4B, NS5A and the RNA-directed RNA polymerase embedded in an ER-derived membranous web. Interacts with host GRB2. Interacts with host BIN1. Interacts with host PIK3R1. Interacts with host SRCAP. Interacts with host FKBP8. Interacts (via C-terminus) with host VAPB (via MSP domain). Interacts with host EIF2AK2/PKR; this interaction leads to disruption of EIF2AK2 dimerization by NS5A and probably allows the virus to evade the innate immune response. Interacts (via N-terminus) with host PACSIN2 (via N-terminus); this interaction attenuates protein kinase C alpha-mediated phosphorylation of PACSIN2 by disrupting the interaction between PACSIN2 and PRKCA. Interacts (via N-terminus) with host SRC kinase (via SH2 domain). Interacts with most Src-family kinases. Interacts with host IFI27 and SKP2; promotes the ubiquitin-mediated proteasomal degradation of NS5A. Interacts with host GPS2. Interacts with host TNFRSF21; this interaction allows the modulation by the virus of JNK, p38 MAPK, STAT3, and Akt signaling pathways in a DR6-dependent manner. Interacts (via N-terminus) with host CIDEB (via N-terminus); this interaction seems to regulate the association of HCV particles with APOE. Interacts with host CHKA/Choline Kinase-alpha; CHKA bridges host PI4KA and NS5A and potentiates NS5A-stimulated PI4KA activity, which then facilitates the targeting of the ternary complex to the ER for viral replication. Interacts with host SPSB2 (via C-terminus); this interaction targets NS5A for ubiquitination and degradation. Interacts with host RAB18; this interaction may promote the association of NS5A and other replicase components with lipid droplets. Interacts (via region D2) with host PPIA/CYPA; the interaction stimulates RNA-binding ability of NS5A and is dependent on the peptidyl-prolyl cis-trans isomerase activity of PPIA/CYPA. Interacts with host TRIM14; this interaction induces the degradation of NS5A. As to quaternary structure, homooligomer. Interacts with non-structural protein 5A. Interacts with host VAPB. Interacts with host PRK2/PKN2. Interacts with host HNRNPA1 and SEPT6; these interactions facilitate viral replication. Part of the replication complex composed of NS2, NS3, NS4A, NS4B, NS5A and the RNA-directed RNA polymerase. The cofactor is Zn(2+). Mg(2+) is required as a cofactor. Specific enzymatic cleavages in vivo yield mature proteins. The structural proteins, core, E1, E2 and p7 are produced by proteolytic processing by host signal peptidases. The core protein precursor is synthesized as a 23 kDa, which is retained in the ER membrane through the hydrophobic signal peptide. Cleavage by the signal peptidase releases the 21 kDa mature core protein. The cleavage of the core protein precursor occurs between aminoacids 176 and 188 but the exact cleavage site is not known. Some degraded forms of the core protein appear as well during the course of infection. The other proteins (p7, NS2, NS3, NS4A, NS4B, NS5A and NS5B) are cleaved by the viral proteases. Autoprocessing between NS2 and NS3 is mediated by the NS2 cysteine protease catalytic domain and regulated by the NS3 N-terminal domain. Post-translationally, phosphorylated by host PKC and PKA. In terms of processing, ubiquitinated; mediated by UBE3A and leading to core protein subsequent proteasomal degradation. Highly N-glycosylated. Post-translationally, palmitoylation is required for NS2/3 autoprocessing and E2 recruitment to membranes. In terms of processing, palmitoylated. This modification may play a role in its polymerization or in protein-protein interactions. Phosphorylated on serines in a basal form termed p56. p58 is a hyperphosphorylated form of p56. p56 and p58 coexist in the cell in roughly equivalent amounts. Hyperphosphorylation is dependent on the presence of NS4A. Host CSNK1A1/CKI-alpha or RPS6KB1 kinases may be responsible for NS5A phosphorylation. Post-translationally, tyrosine phosphorylation is essential for the interaction with host SRC. In terms of processing, the N-terminus is phosphorylated by host PRK2/PKN2.

The protein resides in the host endoplasmic reticulum membrane. It is found in the host mitochondrion membrane. It localises to the virion. The protein localises to the host cytoplasm. Its subcellular location is the host nucleus. The protein resides in the host lipid droplet. It is found in the virion membrane. It localises to the host mitochondrion. The protein localises to the host cell membrane. Its subcellular location is the host perinuclear region. The catalysed reaction is Hydrolysis of four peptide bonds in the viral precursor polyprotein, commonly with Asp or Glu in the P6 position, Cys or Thr in P1 and Ser or Ala in P1'.. It carries out the reaction a ribonucleoside 5'-triphosphate + H2O = a ribonucleoside 5'-diphosphate + phosphate + H(+). The enzyme catalyses ATP + H2O = ADP + phosphate + H(+). It catalyses the reaction RNA(n) + a ribonucleoside 5'-triphosphate = RNA(n+1) + diphosphate. Its activity is regulated as follows. Inhibited by the antiviral drug hexamethylene amiloride. Inhibition by amantadine appears to be genotype-dependent. Also inhibited by long-alkyl-chain iminosugar derivatives. With respect to regulation, activity is up-regulated by PRK2/PKN2-mediated phosphorylation. Functionally, packages viral RNA to form a viral nucleocapsid, and promotes virion budding. Participates in the viral particle production as a result of its interaction with the non-structural protein 5A. Binds RNA and may function as a RNA chaperone to induce the RNA structural rearrangements taking place during virus replication. Modulates viral translation initiation by interacting with viral IRES and 40S ribosomal subunit. Affects various cell signaling pathways, host immunity and lipid metabolism. Prevents the establishment of cellular antiviral state by blocking the interferon-alpha/beta (IFN-alpha/beta) and IFN-gamma signaling pathways and by blocking the formation of phosphorylated STAT1 and promoting ubiquitin-mediated proteasome-dependent degradation of STAT1. Activates STAT3 leading to cellular transformation. Regulates the activity of cellular genes, including c-myc and c-fos. May repress the promoter of p53, and sequester CREB3 and SP110 isoform 3/Sp110b in the cytoplasm. Represses cell cycle negative regulating factor CDKN1A, thereby interrupting an important check point of normal cell cycle regulation. Targets transcription factors involved in the regulation of inflammatory responses and in the immune response: suppresses TNF-induced NF-kappa-B activation, and activates AP-1. Binds to dendritic cells (DCs) via C1QR1, resulting in down-regulation of T-lymphocytes proliferation. Alters lipid metabolism by interacting with hepatocellular proteins involved in lipid accumulation and storage. Induces up-regulation of FAS promoter activity, and thereby contributes to the increased triglyceride accumulation in hepatocytes (steatosis). Its function is as follows. Forms a heterodimer with envelope glycoprotein E2, which mediates virus attachment to the host cell, virion internalization through clathrin-dependent endocytosis and fusion with host membrane. Fusion with the host cell is most likely mediated by both E1 and E2, through conformational rearrangements of the heterodimer required for fusion rather than a classical class II fusion mechanism. E1/E2 heterodimer binds host apolipoproteins such as APOB and ApoE thereby forming a lipo-viro-particle (LVP). APOE associated to the LVP allows the initial virus attachment to cell surface receptors such as the heparan sulfate proteoglycans (HSPGs), syndecan-1 (SDC1), syndecan-1 (SDC2), the low-density lipoprotein receptor (LDLR) and scavenger receptor class B type I (SCARB1). The cholesterol transfer activity of SCARB1 allows E2 exposure and binding of E2 to SCARB1 and the tetraspanin CD81. E1/E2 heterodimer binding on CD81 activates the epithelial growth factor receptor (EGFR) signaling pathway. Diffusion of the complex E1-E2-EGFR-SCARB1-CD81 to the cell lateral membrane allows further interaction with Claudin 1 (CLDN1) and occludin (OCLN) to finally trigger HCV entry. In terms of biological role, forms a heterodimer with envelope glycoprotein E1, which mediates virus attachment to the host cell, virion internalization through clathrin-dependent endocytosis and fusion with host membrane. Fusion with the host cell is most likely mediated by both E1 and E2, through conformational rearrangements of the heterodimer required for fusion rather than a classical class II fusion mechanism. The interaction between envelope glycoprotein E2 and host apolipoprotein E/APOE allows the proper assembly, maturation and infectivity of the viral particles. This interaction is probably promoted via the up-regulation of cellular autophagy by the virus. E1/E2 heterodimer binds host apolipoproteins such as APOB and APOE thereby forming a lipo-viro-particle (LVP). APOE associated to the LVP allows the initial virus attachment to cell surface receptors such as the heparan sulfate proteoglycans (HSPGs), syndecan-1 (SDC1), syndecan-1 (SDC2), the low-density lipoprotein receptor (LDLR) and scavenger receptor class B type I (SCARB1). The cholesterol transfer activity of SCARB1 allows E2 exposure and binding of E2 to SCARB1 and the tetraspanin CD81. E1/E2 heterodimer binding on CD81 activates the epithelial growth factor receptor (EGFR) signaling pathway. Diffusion of the complex E1-E2-EGFR-SCARB1-CD81 to the cell lateral membrane allows further interaction with Claudin 1 (CLDN1) and occludin (OCLN) to finally trigger HCV entry. Inhibits host EIF2AK2/PKR activation, preventing the establishment of an antiviral state. Viral ligand for CD209/DC-SIGN and CLEC4M/DC-SIGNR, which are respectively found on dendritic cells (DCs), and on liver sinusoidal endothelial cells and macrophage-like cells of lymph node sinuses. These interactions allow the capture of circulating HCV particles by these cells and subsequent facilitated transmission to permissive cells such as hepatocytes and lymphocyte subpopulations. The interaction between E2 and host amino acid transporter complex formed by SLC3A2 and SLC7A5/LAT1 may facilitate viral entry into host cell. Ion channel protein that acts as a viroporin and plays an essential role in the assembly, envelopment and secretion of viral particles. Regulates the host cell secretory pathway, which induces the intracellular retention of viral glycoproteins and favors assembly of viral particles. Creates a pore in acidic organelles and releases Ca(2+) and H(+) in the cytoplasm of infected cells, leading to a productive viral infection. High levels of cytoplasmic Ca(2+) may trigger membrane trafficking and transport of viral ER-associated proteins to viroplasms, sites of viral genome replication. This ionic imbalance induces the assembly of the inflammasome complex, which triggers the maturation of pro-IL-1beta into IL-1beta through the action of caspase-1. Targets also host mitochondria and induces mitochondrial depolarization. In addition of its role as a viroporin, acts as a lipid raft adhesion factor. Functionally, cysteine protease required for the proteolytic auto-cleavage between the non-structural proteins NS2 and NS3. The N-terminus of NS3 is required for the function of NS2 protease (active region NS2-3). Promotes the initiation of viral particle assembly by mediating the interaction between structural and non-structural proteins. Its function is as follows. Displays three enzymatic activities: serine protease with a chymotrypsin-like fold, NTPase and RNA helicase. NS3 serine protease, in association with NS4A, is responsible for the cleavages of NS3-NS4A, NS4A-NS4B, NS4B-NS5A and NS5A-NS5B. The NS3/NS4A complex prevents phosphorylation of host IRF3, thus preventing the establishment of dsRNA induced antiviral state. The NS3/NS4A complex induces host amino acid transporter component SLC3A2, thus contributing to HCV propagation. NS3 RNA helicase binds to RNA and unwinds both dsDNA and dsRNA in the 3' to 5' direction, and likely resolves RNA complicated stable secondary structures in the template strand. Binds a single ATP and catalyzes the unzipping of a single base pair of dsRNA. Inhibits host antiviral proteins TBK1 and IRF3 thereby preventing the establishment of an antiviral state. Cleaves host MAVS/CARDIF thereby preventing the establishment of an antiviral state. Cleaves host TICAM1/TRIF, thereby disrupting TLR3 signaling and preventing the establishment of an antiviral state. In terms of biological role, induces a specific membrane alteration that serves as a scaffold for the virus replication complex. This membrane alteration gives rise to the so-called ER-derived membranous web that contains the replication complex. NS4B self-interaction contributes to its function in membranous web formation. Promotes host TRIF protein degradation in a CASP8-dependent manner thereby inhibiting host TLR3-mediated interferon signaling. Disrupts the interaction between STING and TBK1 contributing to the inhibition of interferon signaling. Phosphorylated protein that is indispensable for viral replication and assembly. Both hypo- and hyperphosphorylated states are required for the viral life cycle. The hyperphosphorylated form of NS5A is an inhibitor of viral replication. Involved in RNA-binding and especially in binding to the viral genome. Zinc is essential for RNA-binding. Participates in the viral particle production as a result of its interaction with the mature viral core protein. Its interaction with host VAPB may target the viral replication complex to vesicles. Down-regulates viral IRES translation initiation. Mediates interferon resistance, presumably by interacting with and inhibiting host EIF2AK2/PKR. Prevents BIN1-induced apoptosis. Acts as a transcriptional activator of some host genes important for viral replication when localized in the nucleus. Via the interaction with host PACSIN2, modulates lipid droplet formation in order to promote virion assembly. Modulates TNFRSF21/DR6 signaling pathway for viral propagation. Functionally, RNA-dependent RNA polymerase that performs primer-template recognition and RNA synthesis during viral replication. Initiates RNA transcription/replication at a flavin adenine dinucleotide (FAD), resulting in a 5'- FAD cap on viral RNAs. In this way, recognition of viral 5' RNA by host pattern recognition receptors can be bypassed, thereby evading activation of antiviral pathways. This Hepatitis C virus genotype 1b (isolate HC-J1) (HCV) protein is Genome polyprotein.